The following is a 40-amino-acid chain: Photosystem II reaction center protein J (40 aa).

A helical transmembrane segment spans residues 8 to 28 (IPLWLISTVTGTLVIGLMGIF).

It belongs to the PsbJ family. In terms of assembly, PSII is composed of 1 copy each of membrane proteins PsbA, PsbB, PsbC, PsbD, PsbE, PsbF, PsbH, PsbI, PsbJ, PsbK, PsbL, PsbM, PsbT, PsbX, PsbY, PsbZ, Psb30/Ycf12, at least 3 peripheral proteins of the oxygen-evolving complex and a large number of cofactors. It forms dimeric complexes.

The protein resides in the plastid. It localises to the chloroplast thylakoid membrane. Functionally, one of the components of the core complex of photosystem II (PSII). PSII is a light-driven water:plastoquinone oxidoreductase that uses light energy to abstract electrons from H(2)O, generating O(2) and a proton gradient subsequently used for ATP formation. It consists of a core antenna complex that captures photons, and an electron transfer chain that converts photonic excitation into a charge separation. This Ginkgo biloba (Ginkgo) protein is Photosystem II reaction center protein J.